A 201-amino-acid polypeptide reads, in one-letter code: MAHGPRYRVPFRRRREGKTNYHKRLALLKSGKPRLVVRKSLNHHIAQIVVYDPKGDKTIVSAHTRELMRDFGWKGHGGNTPSAYLLGLLIGYKAKKAGIDEAILDIGLHPPTRGSSVFAVLKGAVDAGLNVPHSEEIYPEDYRITGEHIANYAKALKEEDEGKYRKQFSSYLVKGLEPEKLPEHFEEVKARIIEKFEEARE.

It belongs to the universal ribosomal protein uL18 family. In terms of assembly, part of the 50S ribosomal subunit. Contacts the 5S and 23S rRNAs.

Its function is as follows. This is one of the proteins that bind and probably mediate the attachment of the 5S RNA into the large ribosomal subunit, where it forms part of the central protuberance. This is Large ribosomal subunit protein uL18 from Thermococcus onnurineus (strain NA1).